Consider the following 522-residue polypeptide: F-box only protein 7 (522 aa).

Residues 1–87 form a ubiquitin-like region; that stretch reads MKLRVRLQKR…EDAIAAPNLP (87 aa). Polar residues predominate over residues 88–132; it reads SSTVSEHSSVQNNDQPSLATSSSQSNIQDAQLHDSLQGQATQSEV. Positions 88–151 are disordered; sequence SSTVSEHSSV…GQHFEAEAVP (64 aa). The tract at residues 91–128 is important for interaction with PINK1; that stretch reads VSEHSSVQNNDQPSLATSSSQSNIQDAQLHDSLQGQAT. The segment at 128-168 is important for interaction with CDK6; sequence TQSEVWNDDSVSGPGQHFEAEAVPDVVDVEEGTGYYLAEPM. The segment at 179 to 323 is important for dimerization and interaction with PSMF1; sequence PHSLEILYQS…PLLAFTRQAL (145 aa). An F-box domain is found at 328–374; the sequence is VFGLVVLPLELKLRIFRLLDVRSVLSLSAVCRDLCITSNDQLLWRCL. The tract at residues 380–522 is important for interaction with CDK6; that stretch reads RDGSIRGRDT…WPTDSRLPFM (143 aa). Arg431 and Arg451 each carry omega-N-methylarginine. The short motif at 481–484 is the RFDP motif element; it reads RFDP. The segment at 484–522 is disordered; it reads PVGPLPGPNPILPGRGGPSDRFPLRPSRGWPTDSRLPFM. Arg518 bears the Asymmetric dimethylarginine mark.

Part of the SCF (SKP1-CUL1-F-box) E3 ubiquitin-protein ligase complex SCF(FBXO7) formed of CUL1, SKP1, RBX1 and FBXO7. Interacts via its C-terminal proline-rich region with DLGAP5. Interacts with BIRC2. Interacts with CDK6 and promotes its interaction with D-type cyclin. Interacts (via the N-terminal Ubl domain) with PRKN. Interacts (via N-terminal region) with PINK1. Interacts with PSMF1.

It is found in the cytoplasm. The protein localises to the nucleus. The protein resides in the mitochondrion. It localises to the cytosol. Its pathway is protein modification; protein ubiquitination. Functionally, substrate recognition component of a SCF (SKP1-CUL1-F-box protein) E3 ubiquitin-protein ligase complex which mediates the ubiquitination and subsequent proteasomal degradation of target proteins and plays a role in several biological processes such as cell cycle, cell proliferation, or maintenance of chromosome stability. Recognizes and ubiquitinates BIRC2 and the cell cycle regulator DLGAP5. Plays a role downstream of PINK1 in the clearance of damaged mitochondria via selective autophagy (mitophagy) by targeting PRKN to dysfunctional depolarized mitochondria. Promotes MFN1 ubiquitination. Mediates the ubiquitination and proteasomal degradation of UXT isoform 2, thereby impairing the NF-kappa-B signaling pathway. Inhibits NF-kappa-B pathway also by promoting the ubiquitinatioin of TRAF2. Affects the assembly state and activity of the proteasome in the cells including neurons by ubiquitinating the proteasomal subunit PSMA2 via 'Lys-63'-linked polyubiquitin chains. Promotes 'Lys-48'-linked polyubiquitination SIRT7, leading to the hydrogen peroxide-induced cell death. The sequence is that of F-box only protein 7 (FBXO7) from Bos taurus (Bovine).